The following is a 406-amino-acid chain: Peptidase T (406 aa).

H77 provides a ligand contact to Zn(2+). D79 is an active-site residue. Residue D139 participates in Zn(2+) binding. Residue E173 is the Proton acceptor of the active site. Zn(2+)-binding residues include E174, D196, and H377.

This sequence belongs to the peptidase M20B family. It depends on Zn(2+) as a cofactor.

It localises to the cytoplasm. The catalysed reaction is Release of the N-terminal residue from a tripeptide.. Cleaves the N-terminal amino acid of tripeptides. The chain is Peptidase T from Parabacteroides distasonis (strain ATCC 8503 / DSM 20701 / CIP 104284 / JCM 5825 / NCTC 11152).